Consider the following 205-residue polypeptide: Small ribosomal subunit protein uS4 (205 aa).

The disordered stretch occupies residues 18–46; sequence NIWGRSKSPVNRREYGPGQHGQRRKGKLS. The 64-residue stretch at 94 to 157 folds into the S4 RNA-binding domain; that stretch reads RRLDAVVYRA…RQMTLVLEAQ (64 aa).

This sequence belongs to the universal ribosomal protein uS4 family. Part of the 30S ribosomal subunit. Contacts protein S5. The interaction surface between S4 and S5 is involved in control of translational fidelity.

In terms of biological role, one of the primary rRNA binding proteins, it binds directly to 16S rRNA where it nucleates assembly of the body of the 30S subunit. Functionally, with S5 and S12 plays an important role in translational accuracy. The chain is Small ribosomal subunit protein uS4 from Xanthobacter autotrophicus (strain ATCC BAA-1158 / Py2).